Reading from the N-terminus, the 429-residue chain is Aspartate--tRNA(Asp/Asn) ligase (429 aa).

Glutamate 166 lines the L-aspartate pocket. The aspartate stretch occupies residues 188–191; that stretch reads QLYK. Arginine 210 contacts L-aspartate. Residues 210–212, 218–220, and glutamate 352 contribute to the ATP site; these read RAE and RHL. Positions 352 and 355 each coordinate Mg(2+). 2 residues coordinate L-aspartate: serine 355 and arginine 359. Position 400–403 (400–403) interacts with ATP; sequence GAER.

It belongs to the class-II aminoacyl-tRNA synthetase family. Type 2 subfamily. Homodimer. Requires Mg(2+) as cofactor.

The protein resides in the cytoplasm. It catalyses the reaction tRNA(Asx) + L-aspartate + ATP = L-aspartyl-tRNA(Asx) + AMP + diphosphate. Its function is as follows. Aspartyl-tRNA synthetase with relaxed tRNA specificity since it is able to aspartylate not only its cognate tRNA(Asp) but also tRNA(Asn). Reaction proceeds in two steps: L-aspartate is first activated by ATP to form Asp-AMP and then transferred to the acceptor end of tRNA(Asp/Asn). The chain is Aspartate--tRNA(Asp/Asn) ligase from Methanocorpusculum labreanum (strain ATCC 43576 / DSM 4855 / Z).